The sequence spans 197 residues: Beta-crystallin A2 (197 aa).

An N-terminal arm region spans residues 1-11; the sequence is MSSASAPGPAP. Beta/gamma crystallin 'Greek key' domains are found at residues 12–52 and 53–99; these read ACLT…KVEN and GAWV…RPVL. The tract at residues 100–105 is connecting peptide; that stretch reads CANHSD. 2 consecutive Beta/gamma crystallin 'Greek key' domains span residues 106-147 and 148-196; these read SRVT…KVSS and GAWV…RRVQ.

It belongs to the beta/gamma-crystallin family. Homo/heterodimer, or complexes of higher-order. The structure of beta-crystallin oligomers seems to be stabilized through interactions between the N-terminal arms.

In terms of biological role, crystallins are the dominant structural components of the vertebrate eye lens. This chain is Beta-crystallin A2 (CRYBA2), found in Oryctolagus cuniculus (Rabbit).